The sequence spans 165 residues: Chorismate pyruvate-lyase (165 aa).

Residues methionine 35, arginine 77, leucine 115, and glutamate 156 each contribute to the substrate site.

It belongs to the UbiC family. Monomer.

It localises to the cytoplasm. The enzyme catalyses chorismate = 4-hydroxybenzoate + pyruvate. It participates in cofactor biosynthesis; ubiquinone biosynthesis. In terms of biological role, removes the pyruvyl group from chorismate, with concomitant aromatization of the ring, to provide 4-hydroxybenzoate (4HB) for the ubiquinone pathway. This chain is Chorismate pyruvate-lyase, found in Shigella sonnei (strain Ss046).